Here is an 89-residue protein sequence, read N- to C-terminus: MAKESMKAREVKRAKLVAKYAAKRAQLKAEGNYEALQALPKNASPVRLHNRCKITGRPKGYVRQFGISRIQLREMASNGLIPGVKKASW.

It belongs to the universal ribosomal protein uS14 family. As to quaternary structure, part of the 30S ribosomal subunit. Contacts proteins S3 and S10.

Its function is as follows. Binds 16S rRNA, required for the assembly of 30S particles and may also be responsible for determining the conformation of the 16S rRNA at the A site. The protein is Small ribosomal subunit protein uS14 of Parabacteroides distasonis (strain ATCC 8503 / DSM 20701 / CIP 104284 / JCM 5825 / NCTC 11152).